Consider the following 1018-residue polypeptide: MEPREVKDRILENISLSVKKLQSYFAACEDETPAIRNHDKVLQRLCEHLDHALLYGLQDLSSGYWVLVVHFTRREAIRQIEVLQHVATNLGRSRAWLYLALNENSLESYLRLFQENLGLLQKYYVRNALVCSHDHLTLFLTLVSGLEFIRFDLDLDAPYLDLAPYMPDYYKPQYLLDFEDRLPSSVHGSDSLSLNSFNSVTSTNLEWDDSAIAPSSEDGDLTDTISGPRSTASDLTSSKTSTKSPTQRHNPFNEEQAETASSDTTPVHTTSQEKEEAQAPDQPDACTELEVIRVTKKKKIGKKKKTKLDEDASPLHPTSSQQKCGQQGEGDGLVGTPGLARDPSDTVLASPQEQGEGLSSTAGSSELSELSQMGLLIPEMKDTSMECLGQPLSKVIDKLHGQLDPSTWCSHADPPEQSFRAGSPGEAPEKPPFCDFSEGLPAPMDFYRFTVESPSTVAPGGGHHDPPGPSQPLHVPGSPAAALQEEEEGGRGEGQTSQPVEDRQGEEIQEPEPQEPDSQLPLVSQEPLVSQEPVPEPVSQPEPGTHEALCKLKRDQPSPCLSSAEDSGVEEGQGSPSEMTHPSEFRVDNNHLLLLMIHVFRENEEQLFKMIRMSTGHMEGNLQLLYVLLTDCYVYLLRKGATEKPYLVEEAVSYNELDYVSVGLDQQTVKLVCTNRRKQFLLDTADVALAELFLASLKSAMIKGCREPPYPSILTDATMEKLALAKFVAQESKCEASAVTVHFYGLVHWEDPMEEALGPVPCQCSPAEGTITKEGMLHYKASTSYLGKEHWKACFVVLSNGILYQYPDRTDVIPLLSVNMGGEQCGGCRRSNTTDRPHAFQVILADRPCLELSADSEAEMADWMQHLCQAVSKGVIPQGIAPSPCIPCCLVITEDRLFTCHEDCQTSFFRSLGTARLADITAISTELGKEYCVLEFSQDSPQLLQPWVIYLSCTSELDRFLTALSSGWKAIYQVDLPHKAIHEASIKQKFEDALSLIHSAWQRSDSLCRGRASRDPWC.

An N-acetylmethionine modification is found at methionine 1. Residues 1-289 are interaction with KIF5B; it reads MEPREVKDRI…PDQPDACTEL (289 aa). The RUN domain occupies 36–158; it reads RNHDKVLQRL…IRFDLDLDAP (123 aa). Disordered stretches follow at residues 210–367, 407–440, 452–520, 526–545, and 555–583; these read SAIA…SSEL, TWCS…SEGL, ESPS…DSQL, EPLV…EPGT, and DQPS…THPS. Low complexity predominate over residues 230–245; the sequence is STASDLTSSKTSTKSP. Residues 258–270 are compositionally biased toward polar residues; the sequence is ETASSDTTPVHTT. Residues 294 to 306 are compositionally biased toward basic residues; sequence VTKKKKIGKKKKT. Polar residues-rich tracts occupy residues 316–325 and 347–367; these read HPTSSQQKCG and VLAS…SSEL. Phosphoserine is present on serine 423. The PH domain maps to 770-872; sequence TITKEGMLHY…WMQHLCQAVS (103 aa).

In terms of assembly, interacts with KLC2 (via TPR repeats). Interacts with KIF5B. Interacts with BORCS5. Interacts (via RUN domain) with ARL8B (GTP-bound form); PLEKHM1 and PLEKHM2 compete for interaction with ARL8B. Interacts with ARL8A.

The protein localises to the cytoplasm. It is found in the lysosome membrane. Its function is as follows. Plays a role in lysosomes movement and localization at the cell periphery acting as an effector of ARL8B. Required for ARL8B to exert its effects on lysosome location, recruits kinesin-1 to lysosomes and hence direct their movement toward microtubule plus ends. Binding to ARL8B provides a link from lysosomal membranes to plus-end-directed motility. Critical factor involved in NK cell-mediated cytotoxicity. Drives the polarization of cytolytic granules and microtubule-organizing centers (MTOCs) toward the immune synapse between effector NK lymphocytes and target cells. Required for maintenance of the Golgi apparatus organization. May play a role in membrane tubulation. This chain is Pleckstrin homology domain-containing family M member 2, found in Mus musculus (Mouse).